Consider the following 111-residue polypeptide: Beta-defensin 126 (111 aa).

Residues 1–20 (MKSLLFTLAVFMLLAQLVSG) form the signal peptide. Residues 21 to 63 (NWYVKKCLNDVGICKKKCKPEEMHVKNGWAMCGKQRDCCVPAD) form an in vitro binds to LPS, mediates antimicrobial activity and inhibits LPS-mediated inflammation region. 3 disulfides stabilise this stretch: Cys-27-Cys-58, Cys-34-Cys-52, and Cys-38-Cys-59.

It belongs to the beta-defensin family. Homodimer or homooligomer; disulfide-linked. O-glycosylated; glycans contain alpha(2,3)-linked sialic acids.

The protein resides in the secreted. Highly glycosylated atypical beta-defensin involved in several aspects of sperm function. Facilitates sperm transport in the female reproductive tract and contributes to sperm protection against immunodetection; both functions are probably implicating the negative surface charge provided by its O-linked oligosaccharides in the sperm glycocalyx. Involved in binding of sperm to oviductal epithelial cells to form a sperm reservoir until ovulation. Release from the sperm surface during capacitation and ovaluation by an elevation of oviductal fluid pH is unmasking other surface components and allows sperm to penetrate the cumulus matrix and bind to the zona pellucida of the oocyte. In vitro has antimicrobial activity and may inhibit LPS-mediated inflammation. In Gorilla gorilla gorilla (Western lowland gorilla), this protein is Beta-defensin 126 (DEFB126).